A 436-amino-acid polypeptide reads, in one-letter code: MFDSTLNPLWQRYILAVQEEVKPALGCTEPISLALAAAVAAAELEGPVERVEAWVSPNLMKNGLGVTVPGTGMVGLPIAAALGALGGNANAGLEVLKDATAQAIADAKALLAAGKVSVKIQEPCDEILFSRAKVWNGEKWACVTIVGGHTNIVHIETHNGVVFTQQACVTEGEQESPLTVLSRTTLAEILKFVNEVPFAAIRFILDSAKLNCALSQEGLSGNWGLHIGATLEKQCARGLLAKDLSSSIVIRTSAASDARMGGATLPAMSNSGSGNQGITATMPVVVVAEHFGADDERLARALMLSHLSAIYIHNQLPRLSALCAATTAAMGAAAGMAWLVDGRYETISMAISSMIGDVSGMICDGASNSCAMKVSTSASAAWKAVLMALDDTAVTGNEGIVAHDVEQSIANLCALASHSMQQTDRQIIEIMASKAR.

It belongs to the UPF0597 family.

In Escherichia coli O6:H1 (strain CFT073 / ATCC 700928 / UPEC), this protein is UPF0597 protein YhaM.